The sequence spans 506 residues: RNA-splicing ligase RtcB homolog (506 aa).

The Mn(2+) site is built by aspartate 120, cysteine 123, histidine 228, histidine 260, and histidine 354. 227 to 231 (NHYAE) lines the GMP pocket. Residues 354 to 355 (HN), 403 to 406 (GGTM), serine 410, 429 to 432 (HGAG), and lysine 505 each bind GMP. The active-site GMP-histidine intermediate is histidine 429.

This sequence belongs to the RtcB family. Catalytic component of the tRNA-splicing ligase complex. Requires Mn(2+) as cofactor.

The enzyme catalyses a 3'-end 3'-phospho-ribonucleotide-RNA + a 5'-end dephospho-ribonucleoside-RNA + GTP = a ribonucleotidyl-ribonucleotide-RNA + GMP + diphosphate. The catalysed reaction is a 3'-end 2',3'-cyclophospho-ribonucleotide-RNA + a 5'-end dephospho-ribonucleoside-RNA + GTP + H2O = a ribonucleotidyl-ribonucleotide-RNA + GMP + diphosphate + H(+). Its function is as follows. Catalytic subunit of the tRNA-splicing ligase complex that acts by directly joining spliced tRNA halves to mature-sized tRNAs by incorporating the precursor-derived splice junction phosphate into the mature tRNA as a canonical 3',5'-phosphodiester. May act as an RNA ligase with broad substrate specificity, and may function toward other RNAs. The polypeptide is RNA-splicing ligase RtcB homolog (Drosophila melanogaster (Fruit fly)).